A 513-amino-acid chain; its full sequence is NADH-quinone oxidoreductase subunit N (513 aa).

The next 14 membrane-spanning stretches (helical) occupy residues 20-40, 49-69, 88-108, 117-137, 144-164, 178-198, 219-239, 260-280, 295-315, 323-343, 351-371, 394-414, 429-451, and 474-494; these read SVGF…LIVV, STLL…FIYQ, FAIF…VITM, ISSM…MMMM, LMIF…AGYF, LIYG…IYGV, FVML…IGAV, LSVA…YVAL, WFTL…VVAL, LLAY…IVMD, LFYL…VVLI, GAAL…IGFI, IFMW…YMLI, and LVAQ…GLFF.

Belongs to the complex I subunit 2 family. In terms of assembly, NDH-1 is composed of 14 different subunits. Subunits NuoA, H, J, K, L, M, N constitute the membrane sector of the complex.

It localises to the cell inner membrane. It carries out the reaction a quinone + NADH + 5 H(+)(in) = a quinol + NAD(+) + 4 H(+)(out). Functionally, NDH-1 shuttles electrons from NADH, via FMN and iron-sulfur (Fe-S) centers, to quinones in the respiratory chain. The immediate electron acceptor for the enzyme in this species is believed to be a menaquinone. Couples the redox reaction to proton translocation (for every two electrons transferred, four hydrogen ions are translocated across the cytoplasmic membrane), and thus conserves the redox energy in a proton gradient. In Chlorobium chlorochromatii (strain CaD3), this protein is NADH-quinone oxidoreductase subunit N.